A 93-amino-acid polypeptide reads, in one-letter code: Large ribosomal subunit protein bL27 (93 aa).

Positions 1–9 (MLQLNLQFF) are excised as a propeptide. The disordered stretch occupies residues 14-33 (GVGSTKNGRDSISKRLGAKR).

The protein belongs to the bacterial ribosomal protein bL27 family. In terms of processing, the N-terminus is cleaved by ribosomal processing cysteine protease Prp.

The sequence is that of Large ribosomal subunit protein bL27 from Exiguobacterium sp. (strain ATCC BAA-1283 / AT1b).